The following is a 93-amino-acid chain: Cell division protein CrgA (93 aa).

Helical transmembrane passes span Val31 to Phe51 and Leu70 to Met90.

The protein belongs to the CrgA family.

It localises to the cell membrane. Functionally, involved in cell division. This chain is Cell division protein CrgA, found in Mycobacterium leprae (strain Br4923).